The sequence spans 98 residues: MNLYDVIKKPVITEKSMYALEEGKYTFEVDTRAHKLLIKQAVEAAFDGVKVASVNTVNVKPKAKRVGRYTGFTSKTKKAIITLTADSKAIELFAVEAE.

Belongs to the universal ribosomal protein uL23 family. Part of the 50S ribosomal subunit. Contacts protein L29, and trigger factor when it is bound to the ribosome.

In terms of biological role, one of the early assembly proteins it binds 23S rRNA. One of the proteins that surrounds the polypeptide exit tunnel on the outside of the ribosome. Forms the main docking site for trigger factor binding to the ribosome. This Streptococcus equi subsp. equi (strain 4047) protein is Large ribosomal subunit protein uL23.